The following is a 210-amino-acid chain: Thymidylate kinase (210 aa).

11–18 (GLEGAGKS) contacts ATP.

This sequence belongs to the thymidylate kinase family.

The enzyme catalyses dTMP + ATP = dTDP + ADP. In terms of biological role, phosphorylation of dTMP to form dTDP in both de novo and salvage pathways of dTTP synthesis. In Histophilus somni (strain 2336) (Haemophilus somnus), this protein is Thymidylate kinase.